The following is a 504-amino-acid chain: Kinesin light chain 3 (504 aa).

The stretch at 90–150 (ALSAHVGALE…EEEKRHLEFL (61 aa)) forms a coiled coil. The segment at 153 to 197 (LRQYDPPAESQQSESPPRRDSLASLFPSEEEERKGPEAAGAAAAQ) is disordered. A compositionally biased stretch (low complexity) spans 158 to 167 (PPAESQQSES). Ser173 carries the phosphoserine modification. TPR repeat units follow at residues 207 to 240 (LRTL…LERS), 249 to 282 (ATML…REQT), 291 to 324 (AATL…REKV), 333 to 366 (AKQL…YEAL), and 375 to 408 (AKTK…EDLP). A disordered region spans residues 411-438 (LGAPNTGTAGDAEQALRRSSSLSKIRES). Ser466 is subject to Phosphoserine. Residues 472 to 504 (VDAPRAPGTQFPSWHLDKAPRTLSASTQDLSPH) are disordered. Over residues 494-504 (LSASTQDLSPH) the composition is skewed to polar residues. Position 498 is a phosphothreonine (Thr498). At Ser502 the chain carries Phosphoserine.

It belongs to the kinesin light chain family. Oligomer composed of two heavy chains and two light chains. Associates with microtubulin in an ATP-dependent manner. Interacts with KIF5C. Interacts with ODF1. Interacts with LRGUK. Interacts with VDAC2.

Its subcellular location is the cytoplasm. It is found in the cytoskeleton. It localises to the mitochondrion. Kinesin is a microtubule-associated force-producing protein that may play a role in organelle transport. Plays a role during spermiogenesis in the development of the sperm tail midpiece and in the normal function of spermatozoa. May play a role in the formation of the mitochondrial sheath formation in the developing spermatid midpiece. This Homo sapiens (Human) protein is Kinesin light chain 3 (KLC3).